Here is a 429-residue protein sequence, read N- to C-terminus: UDP-N-acetylglucosamine 1-carboxyvinyltransferase 2 (429 aa).

22-23 (KN) contacts phosphoenolpyruvate. Arg-93 is a binding site for UDP-N-acetyl-alpha-D-glucosamine. The Proton donor role is filled by Cys-117. Cys-117 carries the 2-(S-cysteinyl)pyruvic acid O-phosphothioketal modification. Residues 122–126 (RPIDQ), Asp-305, and Ile-327 contribute to the UDP-N-acetyl-alpha-D-glucosamine site.

The protein belongs to the EPSP synthase family. MurA subfamily.

The protein localises to the cytoplasm. It catalyses the reaction phosphoenolpyruvate + UDP-N-acetyl-alpha-D-glucosamine = UDP-N-acetyl-3-O-(1-carboxyvinyl)-alpha-D-glucosamine + phosphate. The protein operates within cell wall biogenesis; peptidoglycan biosynthesis. In terms of biological role, cell wall formation. Adds enolpyruvyl to UDP-N-acetylglucosamine. The polypeptide is UDP-N-acetylglucosamine 1-carboxyvinyltransferase 2 (Bacillus cereus (strain ATCC 14579 / DSM 31 / CCUG 7414 / JCM 2152 / NBRC 15305 / NCIMB 9373 / NCTC 2599 / NRRL B-3711)).